We begin with the raw amino-acid sequence, 222 residues long: Protein ORM1 (222 aa).

Residues 1–57 (MTELDYQGTAEAASTSYSRNQTDLKPFPSAGSASSSIKTTEPVKDHRRRRSSSIISH) are disordered. At 1-85 (MTELDYQGTA…NATWVDQRGA (85 aa)) the chain is on the cytoplasmic side. The span at 12-23 (AASTSYSRNQTD) shows a compositional bias: polar residues. A phosphoserine mark is found at Ser-29, Ser-32, and Ser-56. Residues 86-106 (WIIHVVIIILLKLFYNLFPGV) traverse the membrane as a helical segment. The Extracellular portion of the chain corresponds to 107-109 (TTE). Residues 110 to 130 (WSWTLTNMTYVIGSYVMFHLI) traverse the membrane as a helical segment. Over 131 to 162 (KGTPFDFNGGAYDNLTMWEQIDDETLYTPSRK) the chain is Cytoplasmic. The helical transmembrane segment at 163–183 (FLISVPIALFLVSTHYAHYDL) threads the bilayer. A topological domain (extracellular) is located at residue Lys-184. A helical transmembrane segment spans residues 185 to 205 (LFSWNCFLTTFGAVVPKLPVT). Topologically, residues 206-222 (HRLRISIPGITGRAQIS) are cytoplasmic.

Belongs to the ORM family. Component of the SPOTS complex, at least composed of LCB1/2 (LCB1 and/or LCB2), ORM1/2 (ORM1 and/or ORM2), SAC1 and TSC3. In terms of processing, phosphorylated in case of disruption of sphingolipid synthesis. Phosphorylation regulates inhibitory activity of serine palmitoyltransferases (LCB1 and LCB2).

It localises to the endoplasmic reticulum membrane. Component of the SPOTS complex that acts as a negative regulator of sphingolipid synthesis. Acts by inhibiting serine palmitoyltransferases (LCB1 and LCB2) activity. Along with ORM2, plays a role in the phosphorylation of LAC1 and YPK1, the distribution of actin patches between mother and daughter cells, and in endocytosis. Disruption or inhibition of sphingolipid synthesis leads to the activation and phosphorylation of YPK1 through the TORC2 and PKH1 pathways, which in turn phosphorylates ORM1 and LAG1 to activate sphingolipid synthesis. In Saccharomyces cerevisiae (strain ATCC 204508 / S288c) (Baker's yeast), this protein is Protein ORM1 (ORM1).